A 134-amino-acid chain; its full sequence is Small ribosomal subunit protein uS11 (134 aa).

Belongs to the universal ribosomal protein uS11 family. In terms of assembly, part of the 30S ribosomal subunit. Interacts with proteins S7 and S18. Binds to IF-3.

Its function is as follows. Located on the platform of the 30S subunit, it bridges several disparate RNA helices of the 16S rRNA. Forms part of the Shine-Dalgarno cleft in the 70S ribosome. This is Small ribosomal subunit protein uS11 from Corynebacterium glutamicum (strain R).